Here is a 115-residue protein sequence, read N- to C-terminus: Salivary anti-complement protein (115 aa).

Residues 1–22 (MKFFYLIFSAIFFLADPALVKC) form the signal peptide. Intrachain disulfides connect Cys-26/Cys-108, Cys-41/Cys-92, and Cys-83/Cys-101.

May form multimers. In terms of tissue distribution, salivary gland (at protein level).

The protein resides in the secreted. Functionally, salivary protein that inhibits the classical pathway of complement system activation in the host while having no inhibitory effect on the alternative or lectin pathways. Prevent cleavage of host C4 and consequently impairs the activation of factors downstream of C4b in the complement cascade. The chain is Salivary anti-complement protein from Lutzomyia longipalpis (Sand fly).